Here is a 359-residue protein sequence, read N- to C-terminus: CDP-glucose 4,6-dehydratase (359 aa).

The protein belongs to the NAD(P)-dependent epimerase/dehydratase family. It depends on NAD(+) as a cofactor.

It carries out the reaction CDP-D-glucose = CDP-4-dehydro-6-deoxy-D-glucose + H2O. Its pathway is nucleotide-sugar biosynthesis; CDP-3,6-dideoxy-D-mannose biosynthesis; CDP-3,6-dideoxy-D-mannose from CTP and alpha-D-glucose 1-phosphate: step 2/5. The protein operates within bacterial outer membrane biogenesis; LPS O-antigen biosynthesis. In Salmonella typhimurium (strain LT2 / SGSC1412 / ATCC 700720), this protein is CDP-glucose 4,6-dehydratase (rfbG).